We begin with the raw amino-acid sequence, 409 residues long: tRNA(Met) cytidine acetate ligase (409 aa).

ATP contacts are provided by residues 7-20 (VVEY…HLYH), glycine 102, asparagine 169, and arginine 194.

The protein belongs to the TmcAL family.

It localises to the cytoplasm. It catalyses the reaction cytidine(34) in elongator tRNA(Met) + acetate + ATP = N(4)-acetylcytidine(34) in elongator tRNA(Met) + AMP + diphosphate. In terms of biological role, catalyzes the formation of N(4)-acetylcytidine (ac(4)C) at the wobble position of elongator tRNA(Met), using acetate and ATP as substrates. First activates an acetate ion to form acetyladenylate (Ac-AMP) and then transfers the acetyl group to tRNA to form ac(4)C34. This is tRNA(Met) cytidine acetate ligase from Clostridium botulinum (strain Okra / Type B1).